The chain runs to 390 residues: Protein dom34 (390 aa).

This sequence belongs to the eukaryotic release factor 1 family. Pelota subfamily. As to quaternary structure, component of the Dom34-Hbs1 complex, also named Pelota-HBS1L complex, composed of dom34 and hbs1. It depends on a divalent metal cation as a cofactor.

It localises to the cytoplasm. Its function is as follows. Component of the Dom34-Hbs1 complex, a complex that recognizes stalled ribosomes and triggers the No-Go Decay (NGD) pathway. In the Dom34-Hbs1 complex, dom34 recognizes ribosomes stalled at the 3' end of an mRNA and engages stalled ribosomes by destabilizing mRNA in the mRNA channel. Following ribosome-binding, the Dom34-Hbs1 complex promotes the disassembly of stalled ribosomes, followed by degradation of damaged mRNAs as part of the NGD pathway. The sequence is that of Protein dom34 from Schizosaccharomyces pombe (strain 972 / ATCC 24843) (Fission yeast).